The sequence spans 333 residues: Porphobilinogen deaminase (333 aa).

S-(dipyrrolylmethanemethyl)cysteine is present on cysteine 255.

It belongs to the HMBS family. As to quaternary structure, monomer. The cofactor is dipyrromethane.

The catalysed reaction is 4 porphobilinogen + H2O = hydroxymethylbilane + 4 NH4(+). The protein operates within porphyrin-containing compound metabolism; protoporphyrin-IX biosynthesis; coproporphyrinogen-III from 5-aminolevulinate: step 2/4. Functionally, tetrapolymerization of the monopyrrole PBG into the hydroxymethylbilane pre-uroporphyrinogen in several discrete steps. The polypeptide is Porphobilinogen deaminase (Burkholderia vietnamiensis (strain G4 / LMG 22486) (Burkholderia cepacia (strain R1808))).